The primary structure comprises 94 residues: Small polypeptide ROTUNDIFOLIA LIKE 1 (94 aa).

Over residues 1-13 (MRQCASASSSTSR) the composition is skewed to polar residues. The tract at residues 1 to 26 (MRQCASASSSTSRPPEAAGEEGKRRR) is disordered. The required for DVL/RTFL small polypeptide activity stretch occupies residues 28–59 (RRGWLLQAAAREQRSRFYIFRRCVAMLLCWYK). A helical transmembrane segment spans residues 63 to 82 (ITPYNVVPLGIYGLVWFATM).

This sequence belongs to the DVL/RTFL small polypeptides family.

Its subcellular location is the cell membrane. In terms of biological role, small polypeptide acting as a regulatory molecule which coordinates cellular responses required for differentiation, growth and development, probably by restricting polar cell proliferation in lateral organs. This Oryza sativa subsp. japonica (Rice) protein is Small polypeptide ROTUNDIFOLIA LIKE 1.